A 74-amino-acid polypeptide reads, in one-letter code: Homeobox protein H40 (74 aa).

Residues 8-67 (ARRARTAFTYEQLVALENKFKTTRYLSVCERLNLALSLSLTETQVKIWFQNRRTKWKKQN) constitute a DNA-binding region (homeobox).

It localises to the nucleus. In Apis mellifera (Honeybee), this protein is Homeobox protein H40.